The primary structure comprises 82 residues: Small ribosomal subunit protein bS16 (82 aa).

This sequence belongs to the bacterial ribosomal protein bS16 family.

The sequence is that of Small ribosomal subunit protein bS16 from Mannheimia succiniciproducens (strain KCTC 0769BP / MBEL55E).